We begin with the raw amino-acid sequence, 349 residues long: Protein RecA (349 aa).

65–72 (GPESSGKT) serves as a coordination point for ATP.

The protein belongs to the RecA family.

It is found in the cytoplasm. In terms of biological role, can catalyze the hydrolysis of ATP in the presence of single-stranded DNA, the ATP-dependent uptake of single-stranded DNA by duplex DNA, and the ATP-dependent hybridization of homologous single-stranded DNAs. It interacts with LexA causing its activation and leading to its autocatalytic cleavage. In Acinetobacter baumannii (strain AB307-0294), this protein is Protein RecA.